Reading from the N-terminus, the 410-residue chain is Acyl-CoA-binding domain-containing protein 5-B (410 aa).

In terms of domain architecture, ACB spans 12-101 (AQKRFEAAVK…IQLIIETLPV (90 aa)). An acyl-CoA-binding positions include 23–32 (IRSLPEDGSY), 43–47 (YSYYK), K69, and Y88. The span at 119–128 (VEDDDDDDDE) shows a compositional bias: acidic residues. Disordered regions lie at residues 119-165 (VEDD…LDDY), 221-242 (SDDE…GSGV), and 254-320 (GANM…DRMD). The stretch at 326-355 (TQITTILSELEDNMQDVLRRLTTLEQLTAS) forms a coiled coil. At 382 to 404 (SPFTAVLTVLWPFAVHWLVQFYL) the chain is embedded in the membrane.

The protein localises to the membrane. Its function is as follows. Binds medium- and long-chain acyl-CoA esters. This Danio rerio (Zebrafish) protein is Acyl-CoA-binding domain-containing protein 5-B (acbd5b).